We begin with the raw amino-acid sequence, 175 residues long: Sialidase 85-1.3 (175 aa).

The protein belongs to the glycosyl hydrolase 33 family.

It catalyses the reaction Hydrolysis of alpha-(2-&gt;3)-, alpha-(2-&gt;6)-, alpha-(2-&gt;8)- glycosidic linkages of terminal sialic acid residues in oligosaccharides, glycoproteins, glycolipids, colominic acid and synthetic substrates.. Functionally, developmentally regulated neuraminidase implicated in parasite invasion of cells. May contribute to the pathology during T.cruzi infection by cleaving sialic acid from cells of the immune system. The protein is Sialidase 85-1.3 (SA85-1.3) of Trypanosoma cruzi.